The sequence spans 311 residues: Lipoyl synthase (311 aa).

C36, C41, C47, C66, C70, C73, and S280 together coordinate [4Fe-4S] cluster. In terms of domain architecture, Radical SAM core spans 51–269; it reads RDGPGTATFM…RVAESEFGFL (219 aa).

This sequence belongs to the radical SAM superfamily. Lipoyl synthase family. Requires [4Fe-4S] cluster as cofactor.

Its subcellular location is the cytoplasm. It carries out the reaction [[Fe-S] cluster scaffold protein carrying a second [4Fe-4S](2+) cluster] + N(6)-octanoyl-L-lysyl-[protein] + 2 oxidized [2Fe-2S]-[ferredoxin] + 2 S-adenosyl-L-methionine + 4 H(+) = [[Fe-S] cluster scaffold protein] + N(6)-[(R)-dihydrolipoyl]-L-lysyl-[protein] + 4 Fe(3+) + 2 hydrogen sulfide + 2 5'-deoxyadenosine + 2 L-methionine + 2 reduced [2Fe-2S]-[ferredoxin]. Its pathway is protein modification; protein lipoylation via endogenous pathway; protein N(6)-(lipoyl)lysine from octanoyl-[acyl-carrier-protein]: step 2/2. Catalyzes the radical-mediated insertion of two sulfur atoms into the C-6 and C-8 positions of the octanoyl moiety bound to the lipoyl domains of lipoate-dependent enzymes, thereby converting the octanoylated domains into lipoylated derivatives. In Halobacterium salinarum (strain ATCC 29341 / DSM 671 / R1), this protein is Lipoyl synthase.